Here is a 594-residue protein sequence, read N- to C-terminus: Protein CBFA2T2 (594 aa).

Phosphoserine is present on serine 24. Lysine 29 participates in a covalent cross-link: Glycyl lysine isopeptide (Lys-Gly) (interchain with G-Cter in SUMO2). A disordered region spans residues 48–96 (GGPRPVSFTPTALSNGINHSPPTLNGAPSPPQRFSNGPASSTSSALTNQ). Polar residues-rich tracts occupy residues 55–70 (FTPTALSNGINHSPPT) and 79–96 (QRFSNGPASSTSSALTNQ). The interval 98–206 (LPATCGARQL…QHEHLLLNTS (109 aa)) is interaction with PRDM14. A TAFH domain is found at 104 to 199 (ARQLSKLKRF…TPSQYLAQHE (96 aa)). The interval 220-257 (VHGNGKRPSPERRDENNFERDTVPPEPPAKRVCTISPA) is disordered. Basic and acidic residues predominate over residues 227-242 (PSPERRDENNFERDTV). Residue serine 255 is modified to Phosphoserine. A nervy homology region 2 (NHR2) region spans residues 322–368 (QDELVDHRLTEREWADEWKHLDHALNCIMEMVEKTRRSMAVLRRCQE). The tract at residues 388–416 (RKTGTELVSRQHSPGSTDSLSNDSQREFT) is disordered. Polar residues predominate over residues 393–410 (ELVSRQHSPGSTDSLSND). Serine 400 bears the Phosphoserine mark. The interval 426 to 475 (VEFWKKTEEAVNKVKIQAMSEVQKAVAEAEQKAFEVIATERARMEQTIAD) is nervy homology region 3 (NHR3). Lysine 440 participates in a covalent cross-link: Glycyl lysine isopeptide (Lys-Gly) (interchain with G-Cter in SUMO2). Residues 442–482 (QAMSEVQKAVAEAEQKAFEVIATERARMEQTIADVKRQAAE) are a coiled coil. The Zn(2+) site is built by cysteine 498, cysteine 501, cysteine 509, cysteine 512, cysteine 518, cysteine 522, histidine 530, and cysteine 534. An MYND-type zinc finger spans residues 498 to 534 (CWNCGRKASETCSGCNIARYCGSFCQHKDWERHHRLC). The segment at 538 to 594 (LHGHSPHSQSRPLLPGGRGSARSADCSVPSPALDKTSATTSRSSTPASVTAIDANGL) is disordered. The residue at position 567 (serine 567) is a Phosphoserine. The segment covering 573-588 (TSATTSRSSTPASVTA) has biased composition (low complexity).

Belongs to the CBFA2T family. Homooligomer. Homotetramerization is mediated by the NHR2 domain. Interacts with CBFA2T3/MTG16. Can interact with RUNX1T1/CBFA2T1. Heterotetramerization between members of the CBFA2T family is proposed. Interacts with RBP, GFI1, TCF4, PRDM14. Interacts with TAL1 and CBFA2T3/MTG16; the heteromer with CBFA2T3/MTG16 may function in repression of TAL1. In terms of tissue distribution, expressed in embryonic stem cells.

The protein localises to the nucleus. Transcriptional corepressor which facilitates transcriptional repression via its association with DNA-binding transcription factors and recruitment of other corepressors and histone-modifying enzymes. Via association with PRDM14 is involved in regulation of embryonic stem cell (ESC) pluripotency. Involved in primordial germ cell (PCG) formation. Stabilizes PRDM14 and OCT4 on chromatin in a homooligomerization-dependent mannerCan repress the expression of MMP7 in a ZBTB33-dependent manner. Through heteromerization with CBFA2T3/MTG16 may be involved in regulation of the proliferation and the differentiation of erythroid progenitors by repressing the expression of TAL1 target genes. Required for the maintenance of the secretory cell lineage in the small intestine. Can inhibit Notch signaling probably by association with RBPJ and may be involved in GFI1-mediated Paneth cell differentiation. In Mus musculus (Mouse), this protein is Protein CBFA2T2 (Cbfa2t2).